The sequence spans 118 residues: Large ribosomal subunit protein bL20 (118 aa).

The protein belongs to the bacterial ribosomal protein bL20 family.

Its function is as follows. Binds directly to 23S ribosomal RNA and is necessary for the in vitro assembly process of the 50S ribosomal subunit. It is not involved in the protein synthesizing functions of that subunit. This chain is Large ribosomal subunit protein bL20, found in Hamiltonella defensa subsp. Acyrthosiphon pisum (strain 5AT).